The primary structure comprises 386 residues: Succinate--CoA ligase [ADP-forming] subunit beta (386 aa).

Residues Lys-46, 53–55, Glu-99, Ala-102, and Glu-107 each bind ATP; that span reads GRG. Mg(2+) is bound by residues Asn-199 and Asp-213. Substrate is bound by residues Asn-264 and 321-323; that span reads GIV.

Belongs to the succinate/malate CoA ligase beta subunit family. In terms of assembly, heterotetramer of two alpha and two beta subunits. Requires Mg(2+) as cofactor.

The catalysed reaction is succinate + ATP + CoA = succinyl-CoA + ADP + phosphate. The enzyme catalyses GTP + succinate + CoA = succinyl-CoA + GDP + phosphate. Its pathway is carbohydrate metabolism; tricarboxylic acid cycle; succinate from succinyl-CoA (ligase route): step 1/1. Succinyl-CoA synthetase functions in the citric acid cycle (TCA), coupling the hydrolysis of succinyl-CoA to the synthesis of either ATP or GTP and thus represents the only step of substrate-level phosphorylation in the TCA. The beta subunit provides nucleotide specificity of the enzyme and binds the substrate succinate, while the binding sites for coenzyme A and phosphate are found in the alpha subunit. This Actinobacillus succinogenes (strain ATCC 55618 / DSM 22257 / CCUG 43843 / 130Z) protein is Succinate--CoA ligase [ADP-forming] subunit beta.